An 89-amino-acid polypeptide reads, in one-letter code: Small ribosomal subunit protein uS15 (89 aa).

This sequence belongs to the universal ribosomal protein uS15 family. Part of the 30S ribosomal subunit. Forms a bridge to the 50S subunit in the 70S ribosome, contacting the 23S rRNA.

Functionally, one of the primary rRNA binding proteins, it binds directly to 16S rRNA where it helps nucleate assembly of the platform of the 30S subunit by binding and bridging several RNA helices of the 16S rRNA. Its function is as follows. Forms an intersubunit bridge (bridge B4) with the 23S rRNA of the 50S subunit in the ribosome. The chain is Small ribosomal subunit protein uS15 from Laribacter hongkongensis (strain HLHK9).